We begin with the raw amino-acid sequence, 526 residues long: Cell adhesion molecule CEACAM1 (526 aa).

An N-terminal signal peptide occupies residues methionine 1 to alanine 34. Glutamine 35 carries the pyrrolidone carboxylic acid modification. Residues glutamine 35–proline 142 enclose the Ig-like V-type domain. Over glutamine 35–glycine 428 the chain is Extracellular. Positions glutamate 39–proline 142 are required for homophilic binding. 20 N-linked (GlcNAc...) asparagine glycosylation sites follow: asparagine 104, asparagine 111, asparagine 115, asparagine 152, asparagine 182, asparagine 197, asparagine 208, asparagine 224, asparagine 232, asparagine 254, asparagine 274, asparagine 288, asparagine 292, asparagine 302, asparagine 309, asparagine 345, asparagine 351, asparagine 363, asparagine 378, and asparagine 405. Ig-like C2-type domains follow at residues proline 145–asparagine 232, proline 237–isoleucine 317, and proline 323–asparagine 413. Cysteine 167 and cysteine 215 are oxidised to a cystine. A disulfide bridge connects residues cysteine 259 and cysteine 299. Residues cysteine 348 and cysteine 396 are joined by a disulfide bond. A helical membrane pass occupies residues alanine 429–leucine 452. Positions cysteine 450–aspartate 462 are interaction with calmodulin. Residues leucine 452–glutamine 526 form an interaction with FLNA region. Residues histidine 453–glutamine 526 are Cytoplasmic-facing. Over residues serine 461–asparagine 482 the composition is skewed to basic and acidic residues. The tract at residues serine 461 to leucine 513 is disordered. The span at asparagine 489–leucine 513 shows a compositional bias: polar residues. The interval asparagine 489–glutamine 526 is required for interaction with PTPN11 and PTPN6 and for control of phosphorylation level. Tyrosine 493 carries the phosphotyrosine; by SRC, LCK, INSR and EGFR modification. Serine 508 is subject to Phosphoserine. At tyrosine 520 the chain carries Phosphotyrosine; by INSR, SRC and LCK. The interval tyrosine 520–valine 523 is essential for interaction with PTPN11 and PTPN6.

It belongs to the immunoglobulin superfamily. CEA family. Monomer. Oligomer. Heterodimer. Homodimer. Cis-dimer/oligomer (via Ig-like C2-type and/or via cytoplasmic domains); induced by trans-homophilic cell adhesion through an allosteric mechanism transmitted by the Ig-like V-type domain, and is regulated by intracellular calcium and calmodulin. Interacts (via cytoplasmic domain) with calmodulin in a calcium dependent manner; reduces homophilic cell adhesion through dissociation of dimer. Isoform 1 interacts (via cytoplasmic domain) with PTPN11 (preferentially) and PTPN6; cis-homodimer form is preferred; this interaction is decreased by formation of Isoform 1 /Isoform 8 cis-heterodimers and is dependent on the monomer/dimer equilibrium; this interaction is phosphorylation-dependent. Isoform 1 interacts with LYN. Isoform 1 interacts (via cytoplasmic domain) with SRC (via SH2 domain); this interaction is regulated by trans-homophilic cell adhesion. Isoform 1 interacts (via cytoplasmic domain) with LCK; mediates phosphorylation at Tyr-493 and Tyr-520 resulting in PTPN6 association. Isoform 1 interacts with PTPN6; this interaction is phosphorylation-dependent and causes a profound decrease in TCR stimulation-induced CD247 and ZAP70 phosphorylation. Isoform 1 interacts with TCR/CD3 complex through TCR beta chain and CD3E; colocalizes at the cell surface and upon stimulation of the TCR/CD3 complex recruits PTPN6 in the TCR/CD3 complex, resulting in dephosphorylation of CD247 and ZAP70. Isoform 1 interacts (via cytoplasmic domain) with SHC1 (via SH2 domain); SHC1 mediates interaction with INSR or EGFR in a Ser-508 phosphorylation-dependent manner. Isoform 1 interacts with EGFR; the interaction is indirect. Isoform 1 interacts with CSF3R; down-regulates the CSF3R-STAT3 pathway through recruitment of PTPN6 that dephosphorylates CSF3R. Isoform 1 (phosphorylated form) interacts with TLR4 and SYK; recruits PTPN6 that dephosphorylates SYK, reducing the production of reactive oxygen species (ROS) and lysosome disruption, leading to a reduction of the inflammasome activity. Isoform 1 interacts with FLNA; inhibits cell migration and cell scattering by interfering with the interaction of FLNA with RALA. Isoform 1 interacts (via cytoplasmic domain) with PXN; the interaction is phosphotyrosyl-dependent. Isoform 1 interacts with KLRK1; recruits PTPN6 that dephosphorylates VAV1. Isoform 1 interacts with CEACAM8. Isoform 1 interacts with FASN; this interaction is insulin and phosphorylation-dependent; reduces fatty-acid synthase activity. Interacts (via Ig-like V-type) with HAVCR2 (via Ig-like V-type); facilitates the maturation and cell surface expression of HAVCR2 thereby regulating T cell tolerance induction. Isoform 8 interacts (via the cytoplasmic domain) with ANXA2; this interaction is regulated by phosphorylation and appears in the AIIt complex. Interacts (via Lewis X moieties) with CD209 (via C-type lectin domain); this interaction is regulated by the glycosylation pattern of CEACAM1 on cell types and regulates contact between dendritic cells and neutrophils. Phosphorylated on serine and tyrosine. Isoform 1 is phosphorylated on tyrosine by Src family kinases like SRC and LCK and by receptor like CSF3R, EGFR and INSR upon stimulation. Phosphorylated at Ser-508; mediates activity. Phosphorylated at Tyr-493; regulates activity. Phosphorylated at Tyr-493 by EGFR and INSR upon stimulation; this phosphorylation is Ser-508-phosphorylation-dependent; mediates cellular internalization; increases interaction with downstream proteins like SHC1 and FASN. Phosphorylated at Tyr-493 and Tyr-520 by LCK; mediates PTPN6 association and is regulated by homophilic ligation of CEACAM1 in the absence of T cell activation. Phosphorylated at Tyr-520; mediates interaction with PTPN11. Post-translationally, phosphorylated on serine and threonine. Expressed in columnar epithelial cells of the colon (at protein level). The predominant forms expressed by T cells are those containing a long cytoplasmic domain. Expressed in granulocytes and lymphocytes. Leukocytes only express isoforms 6 and isoform 1.

Its subcellular location is the cell membrane. It is found in the lateral cell membrane. The protein resides in the apical cell membrane. It localises to the basal cell membrane. The protein localises to the cell junction. Its subcellular location is the adherens junction. It is found in the secreted. The protein resides in the cytoplasmic vesicle. It localises to the secretory vesicle membrane. The protein localises to the cell projection. Its subcellular location is the microvillus membrane. Cell adhesion protein that mediates homophilic cell adhesion in a calcium-independent manner. Plays a role as coinhibitory receptor in immune response, insulin action and also functions as an activator during angiogenesis. Its coinhibitory receptor function is phosphorylation- and PTPN6 -dependent, which in turn, suppress signal transduction of associated receptors by dephosphorylation of their downstream effectors. Plays a role in immune response, of T cells, natural killer (NK) and neutrophils. Upon TCR/CD3 complex stimulation, inhibits TCR-mediated cytotoxicity by blocking granule exocytosis by mediating homophilic binding to adjacent cells, allowing interaction with and phosphorylation by LCK and interaction with the TCR/CD3 complex which recruits PTPN6 resulting in dephosphorylation of CD247 and ZAP70. Also inhibits T cell proliferation and cytokine production through inhibition of JNK cascade and plays a crucial role in regulating autoimmunity and anti-tumor immunity by inhibiting T cell through its interaction with HAVCR2. Upon natural killer (NK) cells activation, inhibit KLRK1-mediated cytolysis of CEACAM1-bearing tumor cells by trans-homophilic interactions with CEACAM1 on the target cell and lead to cis-interaction between CEACAM1 and KLRK1, allowing PTPN6 recruitment and then VAV1 dephosphorylation. Upon neutrophils activation negatively regulates IL1B production by recruiting PTPN6 to a SYK-TLR4-CEACAM1 complex, that dephosphorylates SYK, reducing the production of reactive oxygen species (ROS) and lysosome disruption, which in turn, reduces the activity of the inflammasome. Down-regulates neutrophil production by acting as a coinhibitory receptor for CSF3R by down-regulating the CSF3R-STAT3 pathway through recruitment of PTPN6 that dephosphorylates CSF3R. Also regulates insulin action by promoting INS clearance and regulating lipogenesis in liver through regulating insulin signaling. Upon INS stimulation, undergoes phosphorylation by INSR leading to INS clearance by increasing receptor-mediated insulin endocytosis. This inernalization promotes interaction with FASN leading to receptor-mediated insulin degradation and to reduction of FASN activity leading to negative regulation of fatty acid synthesis. INSR-mediated phosphorylation also provokes a down-regulation of cell proliferation through SHC1 interaction resulting in decrease coupling of SHC1 to the MAPK3/ERK1-MAPK1/ERK2 and phosphatidylinositol 3-kinase pathways. Functions as activator in angiogenesis by promoting blood vessel remodeling through endothelial cell differentiation and migration and in arteriogenesis by increasing the number of collateral arteries and collateral vessel calibers after ischemia. Also regulates vascular permeability through the VEGFR2 signaling pathway resulting in control of nitric oxide production. Down-regulates cell growth in response to EGF through its interaction with SHC1 that mediates interaction with EGFR resulting in decrease coupling of SHC1 to the MAPK3/ERK1-MAPK1/ERK2 pathway. Negatively regulates platelet aggregation by decreasing platelet adhesion on type I collagen through the GPVI-FcRgamma complex. Inhibits cell migration and cell scattering through interaction with FLNA; interferes with the interaction of FLNA with RALA. Mediates bile acid transport activity in a phosphorylation dependent manner. Negatively regulates osteoclastogenesis. In terms of biological role, cell adhesion protein that mediates homophilic cell adhesion in a calcium-independent manner. Promotes populations of T cells regulating IgA production and secretion associated with control of the commensal microbiota and resistance to enteropathogens. This chain is Cell adhesion molecule CEACAM1, found in Homo sapiens (Human).